The chain runs to 492 residues: 5-taurinomethyluridine-[tRNA] synthase subunit GTPB3, mitochondrial (492 aa).

The transit peptide at 1–20 (MWRGLSALVTQAAWAPLRLC) directs the protein to the mitochondrion. 5,10-methylenetetrahydrofolate-binding residues include R52, E112, and K152. Residues 249–416 (GANVVVTGPP…LLQALKTELA (168 aa)) form the TrmE-type G domain. GTP-binding positions include 256–263 (GPPNAGKS), 282–286 (GTTRD), 303–306 (DTAG), and 374–377 (NKSD). N259 serves as a coordination point for K(+). Mg(2+) is bound by residues S263 and T284. K492 provides a ligand contact to 5,10-methylenetetrahydrofolate.

The protein belongs to the TRAFAC class TrmE-Era-EngA-EngB-Septin-like GTPase superfamily. TrmE GTPase family. Homodimer; forms a dimer in the presence of potassium. Interacts with MTO1; forms the GTPBP3-MTO1 complex composed of homodimers of GTPBP3 and MTO1. K(+) is required as a cofactor. In terms of tissue distribution, ubiquitously expressed. Highly expressed in tissues with high metabolic rates including heart, liver and brain. Weakly expressed in skeletal muscle.

The protein localises to the mitochondrion. It carries out the reaction GTP + H2O = GDP + phosphate + H(+). Its function is as follows. GTPase component of the GTPBP3-MTO1 complex that catalyzes the 5-taurinomethyluridine (taum(5)U) modification at the 34th wobble position (U34) of mitochondrial tRNAs (mt-tRNAs), which plays a role in mt-tRNA decoding and mitochondrial translation. Taum(5)U formation on mammalian mt-tRNA requires the presence of both GTPBP3-mediated GTPase activity and MTO1 catalytic activity. This Mus musculus (Mouse) protein is 5-taurinomethyluridine-[tRNA] synthase subunit GTPB3, mitochondrial.